The sequence spans 520 residues: Ubiquitin carboxyl-terminal hydrolase 3 (520 aa).

Methionine 1 is subject to N-acetylmethionine. A UBP-type zinc finger spans residues 1–121; the sequence is MECPHLSSSV…QKVREHLQNL (121 aa). Zn(2+) is bound by residues cysteine 3, histidine 5, cysteine 29, cysteine 32, cysteine 41, cysteine 44, cysteine 49, histidine 56, histidine 60, histidine 82, cysteine 95, and cysteine 98. The USP domain maps to 159–511; it reads TGLRNLGNTC…KAYILFYVER (353 aa). The Nucleophile role is filled by cysteine 168. The active-site Proton acceptor is histidine 471.

Belongs to the peptidase C19 family. USP3 subfamily. In terms of assembly, interacts (via UBP-type domain) with H2A; the interaction is less efficient than with monoubiquitinated H2A.

The protein localises to the nucleus. It localises to the cytoplasm. It catalyses the reaction Thiol-dependent hydrolysis of ester, thioester, amide, peptide and isopeptide bonds formed by the C-terminal Gly of ubiquitin (a 76-residue protein attached to proteins as an intracellular targeting signal).. Functionally, deubiquitinase that plays a role in several cellular processes including transcriptional regulation, cell cycle progression or innate immunity. In response to DNA damage, deubiquitinates monoubiquitinated target proteins such as histone H2A and H2AX and thereby counteracts RNF168- and RNF8-mediated ubiquitination. In turn, participates in the recruitment of DNA damage repair factors to DNA break sites. Required for proper progression through S phase and subsequent mitotic entry. Acts as a positive regulator of TP53 by deubiquitinating and stabilizing it to promote normal cell proliferation and transformation. Participates in establishing tolerance innate immune memory through non-transcriptional feedback. Mechanistically, negatively regulates TLR-induced NF-kappa-B signaling by targeting and removing the 'Lys-63'-linked polyubiquitin chains on MYD88. Negatively regulates the activation of type I interferon signaling by mediating 'Lys-63'-linked polyubiquitin chains on RIGI and IFIH1. Also deubiquinates ASC/PYCARD, the central adapter mediating the assembly and activation of most inflammasomes, and thereby promotes inflammasome activation. The sequence is that of Ubiquitin carboxyl-terminal hydrolase 3 (Usp3) from Mus musculus (Mouse).